The following is a 155-amino-acid chain: Small ribosomal subunit protein uS15 (155 aa).

Basic residues predominate over residues 1–10 (MARMHTRRRG). Positions 1-66 (MARMHTRRRG…EGVQGTPVPD (66 aa)) are disordered. The span at 21 to 33 (EPPEWSDVDEDAI) shows a compositional bias: acidic residues. The span at 34–45 (EERVVELAEQGH) shows a compositional bias: basic and acidic residues.

Belongs to the universal ribosomal protein uS15 family. In terms of assembly, part of the 30S ribosomal subunit.

The chain is Small ribosomal subunit protein uS15 from Halobacterium salinarum (strain ATCC 700922 / JCM 11081 / NRC-1) (Halobacterium halobium).